The following is a 320-amino-acid chain: ATP-dependent 6-phosphofructokinase (320 aa).

Gly-12 is an ATP binding site. Residues Arg-22–Arg-26 and Arg-55–Asp-60 contribute to the ADP site. Residues Arg-73–Phe-74 and Gly-103–Ser-106 contribute to the ATP site. Asp-104 serves as a coordination point for Mg(2+). Thr-126–Asp-128 serves as a coordination point for substrate. The active-site Proton acceptor is Asp-128. An ADP-binding site is contributed by Arg-155. Substrate-binding positions include Arg-163 and Met-170–Arg-172. ADP contacts are provided by residues Gly-186–Glu-188, Lys-212, and Lys-214–His-216. Residues Glu-223, Arg-244, and His-250–Arg-253 contribute to the substrate site.

It belongs to the phosphofructokinase type A (PFKA) family. ATP-dependent PFK group I subfamily. Prokaryotic clade 'B1' sub-subfamily. As to quaternary structure, homotetramer. Requires Mg(2+) as cofactor.

Its subcellular location is the cytoplasm. It catalyses the reaction beta-D-fructose 6-phosphate + ATP = beta-D-fructose 1,6-bisphosphate + ADP + H(+). The protein operates within carbohydrate degradation; glycolysis; D-glyceraldehyde 3-phosphate and glycerone phosphate from D-glucose: step 3/4. With respect to regulation, allosterically activated by ADP and other diphosphonucleosides, and allosterically inhibited by phosphoenolpyruvate. Catalyzes the phosphorylation of D-fructose 6-phosphate to fructose 1,6-bisphosphate by ATP, the first committing step of glycolysis. This Citrobacter koseri (strain ATCC BAA-895 / CDC 4225-83 / SGSC4696) protein is ATP-dependent 6-phosphofructokinase.